The following is a 141-amino-acid chain: Large ribosomal subunit protein uL11 (141 aa).

This sequence belongs to the universal ribosomal protein uL11 family. In terms of assembly, part of the ribosomal stalk of the 50S ribosomal subunit. Interacts with L10 and the large rRNA to form the base of the stalk. L10 forms an elongated spine to which L12 dimers bind in a sequential fashion forming a multimeric L10(L12)X complex. In terms of processing, one or more lysine residues are methylated.

In terms of biological role, forms part of the ribosomal stalk which helps the ribosome interact with GTP-bound translation factors. This chain is Large ribosomal subunit protein uL11, found in Clostridium botulinum (strain Alaska E43 / Type E3).